The chain runs to 361 residues: tRNA-specific 2-thiouridylase MnmA (361 aa).

Residues 6–13 and L32 each bind ATP; that span reads AMSGGVDS. C101 (nucleophile) is an active-site residue. A disulfide bridge connects residues C101 and C194. G125 provides a ligand contact to ATP. The tract at residues 144 to 146 is interaction with tRNA; the sequence is KDQ. C194 serves as the catalytic Cysteine persulfide intermediate.

The protein belongs to the MnmA/TRMU family.

It localises to the cytoplasm. It catalyses the reaction S-sulfanyl-L-cysteinyl-[protein] + uridine(34) in tRNA + AH2 + ATP = 2-thiouridine(34) in tRNA + L-cysteinyl-[protein] + A + AMP + diphosphate + H(+). Catalyzes the 2-thiolation of uridine at the wobble position (U34) of tRNA, leading to the formation of s(2)U34. The sequence is that of tRNA-specific 2-thiouridylase MnmA from Corynebacterium aurimucosum (strain ATCC 700975 / DSM 44827 / CIP 107346 / CN-1) (Corynebacterium nigricans).